The primary structure comprises 625 residues: Phosphomethylpyrimidine synthase (625 aa).

Substrate-binding positions include Asn230, Met259, Tyr288, His324, 344-346, 385-388, and Glu424; these read SRG and DGLR. Residue His428 coordinates Zn(2+). Residue Tyr451 coordinates substrate. His492 is a binding site for Zn(2+). [4Fe-4S] cluster contacts are provided by Cys572, Cys575, and Cys580.

This sequence belongs to the ThiC family. Homodimer. [4Fe-4S] cluster is required as a cofactor.

It catalyses the reaction 5-amino-1-(5-phospho-beta-D-ribosyl)imidazole + S-adenosyl-L-methionine = 4-amino-2-methyl-5-(phosphooxymethyl)pyrimidine + CO + 5'-deoxyadenosine + formate + L-methionine + 3 H(+). It participates in cofactor biosynthesis; thiamine diphosphate biosynthesis. Functionally, catalyzes the synthesis of the hydroxymethylpyrimidine phosphate (HMP-P) moiety of thiamine from aminoimidazole ribotide (AIR) in a radical S-adenosyl-L-methionine (SAM)-dependent reaction. The sequence is that of Phosphomethylpyrimidine synthase from Xanthomonas oryzae pv. oryzae (strain MAFF 311018).